The chain runs to 385 residues: Serpin-Z1 (385 aa).

The RCL stretch occupies residues 317–341 (GAEAAAATADGDCGCSLDFVEPPKK).

It belongs to the serpin family.

Functionally, probable serine protease inhibitor. In Arabidopsis thaliana (Mouse-ear cress), this protein is Serpin-Z1.